Reading from the N-terminus, the 283-residue chain is Coiled-coil domain-containing protein 42 homolog (283 aa).

Coiled coils occupy residues 31-139 (ATQL…LQRY) and 174-204 (QDLR…HRVS).

This sequence belongs to the CFAP73 family.

The polypeptide is Coiled-coil domain-containing protein 42 homolog (Monosiga brevicollis (Choanoflagellate)).